The sequence spans 166 residues: FMN reductase (NADH) RutF (166 aa).

It belongs to the non-flavoprotein flavin reductase family. RutF subfamily.

It catalyses the reaction FMNH2 + NAD(+) = FMN + NADH + 2 H(+). In terms of biological role, catalyzes the reduction of FMN to FMNH2 which is used to reduce pyrimidine by RutA via the Rut pathway. In Cronobacter sakazakii (strain ATCC BAA-894) (Enterobacter sakazakii), this protein is FMN reductase (NADH) RutF.